We begin with the raw amino-acid sequence, 790 residues long: Vacuolar protein sorting-associated protein 35B (790 aa).

This sequence belongs to the VPS35 family. In terms of assembly, component of the retromer complex which consists of VPS29 (MAG1), VPS26 (VPS26A or VPS26B), VPS35 (VPS35A or VPS35B or VPS35C), VPS5/17 (SNX1 or SNX2A or SNX2B). Component of a retromer subcomplex consisting of VPS29 (MAG1), VPS26 (VPS26A or VPS26B), VPS35 (VPS35A or VPS35B or VPS35C). As to expression, expressed in siliques and maturing seeds (at protein level).

It is found in the cytoplasm. The protein localises to the endosome membrane. It localises to the prevacuolar compartment membrane. The protein resides in the golgi apparatus. Its subcellular location is the trans-Golgi network membrane. Its function is as follows. Plays a role in vesicular protein sorting. Component of the membrane-associated retromer complex which is essential in endosome-to-Golgi retrograde transport. Also involved in the efficient sorting of seed storage proteins globulin 12S and albumin 2S. The VPS29-VPS26-VPS35 subcomplex may be involved in recycling of specific cargos from endosome to the plasma membrane. In Arabidopsis thaliana (Mouse-ear cress), this protein is Vacuolar protein sorting-associated protein 35B (VPS35B).